The following is a 530-amino-acid chain: MDFKYSDTVIHNGVVFYITDGGHRVYFLYGGCLLSVPRPHATAESGEIAKFGLTLRGLTHNDRVVANYVRSELNRTGRHESAPSSEEDVFVDRLEVLAQGAQAFGRDICGSFDLEVYDPYLAECMVSLKVTSGLIVSTGRDIPQDGMLHLYTVPTITNASSGFIYTPNIACFTLVQAYLTELPPELETLISGLFDHIPVARPPLRDESGGHSRTDIIVTSPRAVKTMAIGGTTRCSKRPLRKTVVSDFVQVRLIPKPCSIWDSASRVASGASLQSLQLLFKIADEIILIEEPWPGLDEHLNQARSTIVDAILAVYGNEGKLRFFGGKLTQQGVTTLQRFVLCQFILGKWNLINCYAALEQLAESYIGAVPEARDPLPDPHLVADAVNEIIRESGILGELCEIIVRYTQPTDPVNGSGSEVVELEARLLAEFAANATRVELGLSSYDEVRNMEARIASVLNKLYAKDGIGGAAQVACRILGSGLPVAIVLNVSSITAFDGLDLSRKGAYYLYYLLSERLKRGGVTVHVSRK.

It belongs to the alphaherpesvirinae UL21 protein family. As to quaternary structure, interacts (via C-terminus) with UL16.

It is found in the virion tegument. It localises to the host cytoplasm. Its subcellular location is the host nucleus. Functionally, may participate in DNA packaging/capsid maturation events. Promotes efficient incorporation of tegument proteins UL46, UL49, and US3 homologs into virions. May also play a role in capsid transport to the trans-Golgi network (TGN). The chain is Tegument protein UL21 homolog from Equus caballus (Horse).